Here is a 93-residue protein sequence, read N- to C-terminus: Co-chaperonin GroES (93 aa).

It belongs to the GroES chaperonin family. In terms of assembly, heptamer of 7 subunits arranged in a ring. Interacts with the chaperonin GroEL.

The protein resides in the cytoplasm. In terms of biological role, together with the chaperonin GroEL, plays an essential role in assisting protein folding. The GroEL-GroES system forms a nano-cage that allows encapsulation of the non-native substrate proteins and provides a physical environment optimized to promote and accelerate protein folding. GroES binds to the apical surface of the GroEL ring, thereby capping the opening of the GroEL channel. This Geobacillus kaustophilus (strain HTA426) protein is Co-chaperonin GroES.